The primary structure comprises 274 residues: Diaminopimelate epimerase (274 aa).

Positions 11, 44, and 64 each coordinate substrate. Cys-73 acts as the Proton donor in catalysis. Residues 74–75 (GN), Asn-157, Asn-190, and 208–209 (ER) each bind substrate. Cys-217 serves as the catalytic Proton acceptor. Position 218–219 (218–219 (GS)) interacts with substrate.

This sequence belongs to the diaminopimelate epimerase family. In terms of assembly, homodimer.

The protein resides in the cytoplasm. It carries out the reaction (2S,6S)-2,6-diaminopimelate = meso-2,6-diaminopimelate. It participates in amino-acid biosynthesis; L-lysine biosynthesis via DAP pathway; DL-2,6-diaminopimelate from LL-2,6-diaminopimelate: step 1/1. Catalyzes the stereoinversion of LL-2,6-diaminopimelate (L,L-DAP) to meso-diaminopimelate (meso-DAP), a precursor of L-lysine and an essential component of the bacterial peptidoglycan. This is Diaminopimelate epimerase from Salmonella agona (strain SL483).